The following is a 369-amino-acid chain: Protein DUF642 L-GALACTONO-1,4-LACTONE-RESPONSIVE GENE 2 (369 aa).

The signal sequence occupies residues 1-19; that stretch reads MEGVTVVSFFLLFIATAMA. An N-linked (GlcNAc...) asparagine glycan is attached at N125.

As to expression, expressed in roots, seedlings and leaves.

It is found in the secreted. The protein localises to the cell wall. Its function is as follows. Involved in the regulation of testa rupture during seed germination. Required during roots and rosettes development. The chain is Protein DUF642 L-GALACTONO-1,4-LACTONE-RESPONSIVE GENE 2 from Arabidopsis thaliana (Mouse-ear cress).